The primary structure comprises 262 residues: Expansin-A21 (262 aa).

An N-terminal signal peptide occupies residues 1–29 (MKLLEKMTYVECFMIIMATWFMFISYSHG). The region spanning 64–169 (EGACGYGDLN…RRVPCAKTGG (106 aa)) is the Expansin-like EG45 domain. One can recognise an Expansin-like CBD domain in the interval 179 to 258 (NILTILPYNV…SWGFGQTFDG (80 aa)).

Belongs to the expansin family. Expansin A subfamily.

It is found in the secreted. The protein localises to the cell wall. It localises to the membrane. Causes loosening and extension of plant cell walls by disrupting non-covalent bonding between cellulose microfibrils and matrix glucans. No enzymatic activity has been found. This Arabidopsis thaliana (Mouse-ear cress) protein is Expansin-A21 (EXPA21).